The following is a 396-amino-acid chain: NADH-quinone oxidoreductase subunit D (396 aa).

The protein belongs to the complex I 49 kDa subunit family. NDH-1 is composed of 14 different subunits. Subunits NuoB, C, D, E, F, and G constitute the peripheral sector of the complex.

The protein resides in the cell inner membrane. It catalyses the reaction a quinone + NADH + 5 H(+)(in) = a quinol + NAD(+) + 4 H(+)(out). In terms of biological role, NDH-1 shuttles electrons from NADH, via FMN and iron-sulfur (Fe-S) centers, to quinones in the respiratory chain. The immediate electron acceptor for the enzyme in this species is believed to be ubiquinone. Couples the redox reaction to proton translocation (for every two electrons transferred, four hydrogen ions are translocated across the cytoplasmic membrane), and thus conserves the redox energy in a proton gradient. This is NADH-quinone oxidoreductase subunit D from Bartonella bacilliformis (strain ATCC 35685 / KC583 / Herrer 020/F12,63).